The chain runs to 266 residues: Energy-coupling factor transporter transmembrane protein EcfT 1 (266 aa).

Helical transmembrane passes span 33 to 53 (IGIL…LFTL), 73 to 93 (LIWL…GGTI), 107 to 127 (LLNG…STVI), 152 to 172 (VPVN…PTLM), and 243 to 263 (HFGD…LVIL).

Belongs to the energy-coupling factor EcfT family. Forms a stable energy-coupling factor (ECF) transporter complex composed of 2 membrane-embedded substrate-binding proteins (S component), 2 ATP-binding proteins (A component) and 2 transmembrane proteins (T component). May be able to interact with more than 1 S component at a time.

The protein resides in the cell membrane. In terms of biological role, transmembrane (T) component of an energy-coupling factor (ECF) ABC-transporter complex. Unlike classic ABC transporters this ECF transporter provides the energy necessary to transport a number of different substrates. This is Energy-coupling factor transporter transmembrane protein EcfT 1 from Listeria monocytogenes serotype 1/2a (strain 08-5578).